The primary structure comprises 262 residues: Phosphatase SCO2771 (262 aa).

Displays phosphatase activity against p-nitrophenyl phosphate (pNPP) in vitro; however, the physiological substrate is unknown. The protein is Phosphatase SCO2771 of Streptomyces coelicolor (strain ATCC BAA-471 / A3(2) / M145).